Consider the following 468-residue polypeptide: Purple acid phosphatase 10 (468 aa).

A signal peptide spans 1–25 (MGRVRKSDFGSIVLVLCCVLNSLLC). N-linked (GlcNAc...) asparagine glycosylation is found at Asn95 and Asn113. Position 167 (Asp167) interacts with Fe cation. N-linked (GlcNAc...) asparagine glycosylation is present at Asn175. 2 residues coordinate Fe cation: Asp196 and Tyr199. Residue Asp196 coordinates Zn(2+). Residue Asn233 coordinates Zn(2+). Asn233 is a substrate binding site. The N-linked (GlcNAc...) asparagine glycan is linked to Asn306. Zn(2+) is bound at residue His318. Catalysis depends on His328, which acts as the Proton donor. Residue His355 coordinates Zn(2+). 355–357 (HVH) provides a ligand contact to substrate. His357 is a binding site for Fe cation. Asn428 carries an N-linked (GlcNAc...) asparagine glycan.

This sequence belongs to the metallophosphoesterase superfamily. Purple acid phosphatase family. Homodimer; disulfide-linked. Requires Fe cation as cofactor. Zn(2+) serves as cofactor. Expressed in roots, stems, leaves, flowers and siliques.

It localises to the secreted. The protein resides in the cytoplasm. The catalysed reaction is a phosphate monoester + H2O = an alcohol + phosphate. The sequence is that of Purple acid phosphatase 10 (PAP10) from Arabidopsis thaliana (Mouse-ear cress).